A 307-amino-acid polypeptide reads, in one-letter code: Cuticle collagen 36 (307 aa).

Disordered regions lie at residues 76–102 and 116–307; these read TRSRRDAGYKEGSGSGGSGSGGYGGPT and QQGP…PPGY. A compositionally biased stretch (gly residues) spans 86–102; sequence EGSGSGGSGSGGYGGPT. 6 triple-helical region regions span residues 89–105, 118–150, 167–187, 194–226, 231–257, and 260–295; these read GSGGSGSGGYGGPTGAG, GPAGPPGPAGDTGPNGNDGHHGAPGVPGKEGSI, GPQGAVGQQGPKGPPGPKGKS, GKNGEPGMIGPPGPPGGVGEPGPPGPAGQPGRV, GAAGPAGPRGVKGPPGPKGLPGIAGLT, and GGQGPPGDAGGPGPVGGQGPPGPQGPQGPPGDEGSC. The span at 157 to 168 shows a compositional bias: pro residues; that stretch reads PSEPCIICPPGP. The span at 186–196 shows a compositional bias: basic and acidic residues; the sequence is KSQERAADGKN. Positions 202 to 220 are enriched in pro residues; that stretch reads IGPPGPPGGVGEPGPPGPA. Over residues 231–242 the composition is skewed to low complexity; it reads GAAGPAGPRGVK. Over residues 258–278 the composition is skewed to gly residues; sequence EIGGQGPPGDAGGPGPVGGQG. The span at 279-288 shows a compositional bias: pro residues; sequence PPGPQGPQGP.

This sequence belongs to the cuticular collagen family. As to quaternary structure, collagen polypeptide chains are complexed within the cuticle by disulfide bonds and other types of covalent cross-links.

In terms of biological role, nematode cuticles are composed largely of collagen-like proteins. The cuticle functions both as an exoskeleton and as a barrier to protect the worm from its environment. The protein is Cuticle collagen 36 (col-36) of Caenorhabditis elegans.